A 428-amino-acid polypeptide reads, in one-letter code: Light-independent protochlorophyllide reductase subunit N (428 aa).

Residues Cys-30, Cys-55, and Cys-116 each coordinate [4Fe-4S] cluster.

Belongs to the BchN/ChlN family. As to quaternary structure, protochlorophyllide reductase is composed of three subunits; BchL, BchN and BchB. Forms a heterotetramer of two BchB and two BchN subunits. It depends on [4Fe-4S] cluster as a cofactor.

The catalysed reaction is chlorophyllide a + oxidized 2[4Fe-4S]-[ferredoxin] + 2 ADP + 2 phosphate = protochlorophyllide a + reduced 2[4Fe-4S]-[ferredoxin] + 2 ATP + 2 H2O. It participates in porphyrin-containing compound metabolism; bacteriochlorophyll biosynthesis (light-independent). Component of the dark-operative protochlorophyllide reductase (DPOR) that uses Mg-ATP and reduced ferredoxin to reduce ring D of protochlorophyllide (Pchlide) to form chlorophyllide a (Chlide). This reaction is light-independent. The NB-protein (BchN-BchB) is the catalytic component of the complex. In Bradyrhizobium sp. (strain BTAi1 / ATCC BAA-1182), this protein is Light-independent protochlorophyllide reductase subunit N.